We begin with the raw amino-acid sequence, 95 residues long: Aspartyl/glutamyl-tRNA(Asn/Gln) amidotransferase subunit C (95 aa).

This sequence belongs to the GatC family. Heterotrimer of A, B and C subunits.

It carries out the reaction L-glutamyl-tRNA(Gln) + L-glutamine + ATP + H2O = L-glutaminyl-tRNA(Gln) + L-glutamate + ADP + phosphate + H(+). It catalyses the reaction L-aspartyl-tRNA(Asn) + L-glutamine + ATP + H2O = L-asparaginyl-tRNA(Asn) + L-glutamate + ADP + phosphate + 2 H(+). Functionally, allows the formation of correctly charged Asn-tRNA(Asn) or Gln-tRNA(Gln) through the transamidation of misacylated Asp-tRNA(Asn) or Glu-tRNA(Gln) in organisms which lack either or both of asparaginyl-tRNA or glutaminyl-tRNA synthetases. The reaction takes place in the presence of glutamine and ATP through an activated phospho-Asp-tRNA(Asn) or phospho-Glu-tRNA(Gln). The polypeptide is Aspartyl/glutamyl-tRNA(Asn/Gln) amidotransferase subunit C (Dehalococcoides mccartyi (strain CBDB1)).